A 400-amino-acid chain; its full sequence is WW domain-containing transcription regulator protein 1 (400 aa).

Lys-46 is covalently cross-linked (Glycyl lysine isopeptide (Lys-Gly) (interchain with G-Cter in ubiquitin)). The tract at residues Phe-52–Ser-117 is disordered. Positions His-61–Ser-70 are enriched in polar residues. A Phosphoserine modification is found at Ser-62. Position 89 is a phosphoserine; by LATS2 (Ser-89). Ser-105 carries the post-translational modification Phosphoserine. The WW domain maps to Leu-124–Lys-157. The required for interaction with PALS1 stretch occupies residues Pro-222–Leu-400. The stretch at Leu-225–Ala-259 forms a coiled coil. At Ser-295 the chain carries Phosphoserine. Ser-311 bears the Phosphoserine; by LATS2 mark. The PDZ-binding signature appears at Glu-394–Leu-400.

In terms of assembly, binds to SLC9A3R2 via the PDZ motif at the plasma membrane. Binds to YWHAZ in vivo and in vitro through the phosphoserine-binding motif RSHSSP. Interacts (via coiled-coil domain) with SMAD2 (via MH1 domain), SMAD3 and SMAD4. Interacts with MED15. Interacts with PAX8 and NKX2-1. Interacts with TEAD1, TEAD2, TEAD3 and TEAD4. Interacts (via WW domain) with PALS1. Interacts with LATS1. Interacts with YAP1 (when phosphorylated at 'Ser-127'). Interacts (via WW domain) with PRRG4 (via cytoplasmic domain). Interacts (via WW domain) with AMOTL2 (via PPXY motif); the interaction promotes WWTR1/TAZ localization to the cytoplasm and tight junctions, thereby inhibiting its transcriptional coactivator properties. Interacts (via WW domain) with AMOT isoform 1; the interaction facilitates translocation of WWTR1/TAZ to the cytoplasm. In terms of processing, phosphorylated by LATS2 and STK3/MST2. Phosphorylation by LATS2 results in creation of 14-3-3 binding sites, retention in the cytoplasm, and functional inactivation. Phosphorylation results in the inhibition of transcriptional coactivation through YWHAZ-mediated nuclear export. Phosphorylated in the nucleus by PRP4K; phosphorylation leads to nuclear exclusion. Ubiquitinated at Lys-46; leading to proteasomal degradation. Deubiquitinated and stabilized by UCHL1 at Lys-46; leading to inhibition of osteoclastogenesis. As to expression, highly expressed in kidney, heart, placenta and lung. Expressed in the thyroid tissue.

It localises to the nucleus. Its subcellular location is the cytoplasm. It is found in the cell membrane. The protein localises to the cell junction. The protein resides in the tight junction. Transcriptional coactivator which acts as a downstream regulatory target in the Hippo signaling pathway that plays a pivotal role in organ size control and tumor suppression by restricting proliferation and promoting apoptosis. The core of this pathway is composed of a kinase cascade wherein STK3/MST2 and STK4/MST1, in complex with its regulatory protein SAV1, phosphorylates and activates LATS1/2 in complex with its regulatory protein MOB1, which in turn phosphorylates and inactivates YAP1 oncoprotein and WWTR1/TAZ. WWTR1 enhances PAX8 and NKX2-1/TTF1-dependent gene activation. In conjunction with YAP1, involved in the regulation of TGFB1-dependent SMAD2 and SMAD3 nuclear accumulation. Plays a key role in coupling SMADs to the transcriptional machinery such as the mediator complex. Regulates embryonic stem-cell self-renewal, promotes cell proliferation and epithelial-mesenchymal transition. In Homo sapiens (Human), this protein is WW domain-containing transcription regulator protein 1.